The following is a 331-amino-acid chain: MNAVDYLRISLIDRCNFRCQYCMPDTQDLQFLQPTAVLTATELLTLIRDVFIPLGFARFRLTGGEPLLRPDILDIVRGVIALPQVKDLAMTTNAFLLEPLAQDLFEAGLRRINISLDSLVPETFATIVGRDSQRHKRWNKVWAGIQKAYQVGFNPLKLNVVIIPGVNDHEVLDLAALTIDRQWHVRFIEFMPIGNADLFCDRGWIPSEELRTQIRDRWGLTDGQVQGNGPADVFQIPGAQGTLGFISQMSECFCDRCNRMRLSADGWLRPCLLNETGQLDLKTALRDGVSTDELRDRVRQLLELKPEINYKERQSGTVGANYSRTMSQIGG.

A Radical SAM core domain is found at 1–231 (MNAVDYLRIS…DGQVQGNGPA (231 aa)). Position 8 (arginine 8) interacts with GTP. Cysteine 15 and cysteine 19 together coordinate [4Fe-4S] cluster. Tyrosine 21 is a binding site for S-adenosyl-L-methionine. Cysteine 22 contacts [4Fe-4S] cluster. Arginine 60 is a binding site for GTP. Glycine 64 contacts S-adenosyl-L-methionine. A GTP-binding site is contributed by threonine 91. Serine 115 is a binding site for S-adenosyl-L-methionine. Lysine 157 is a GTP binding site. Methionine 191 serves as a coordination point for S-adenosyl-L-methionine. [4Fe-4S] cluster is bound by residues cysteine 254 and cysteine 257. 259-261 (RMR) is a GTP binding site. Cysteine 271 provides a ligand contact to [4Fe-4S] cluster.

The protein belongs to the radical SAM superfamily. MoaA family. As to quaternary structure, monomer and homodimer. Requires [4Fe-4S] cluster as cofactor.

The catalysed reaction is GTP + AH2 + S-adenosyl-L-methionine = (8S)-3',8-cyclo-7,8-dihydroguanosine 5'-triphosphate + 5'-deoxyadenosine + L-methionine + A + H(+). It participates in cofactor biosynthesis; molybdopterin biosynthesis. Functionally, catalyzes the cyclization of GTP to (8S)-3',8-cyclo-7,8-dihydroguanosine 5'-triphosphate. The polypeptide is GTP 3',8-cyclase (Acaryochloris marina (strain MBIC 11017)).